A 673-amino-acid chain; its full sequence is DNA mismatch repair protein MutL (673 aa).

The protein belongs to the DNA mismatch repair MutL/HexB family.

This protein is involved in the repair of mismatches in DNA. It is required for dam-dependent methyl-directed DNA mismatch repair. May act as a 'molecular matchmaker', a protein that promotes the formation of a stable complex between two or more DNA-binding proteins in an ATP-dependent manner without itself being part of a final effector complex. This is DNA mismatch repair protein MutL from Ehrlichia chaffeensis (strain ATCC CRL-10679 / Arkansas).